Reading from the N-terminus, the 99-residue chain is Aspartyl/glutamyl-tRNA(Asn/Gln) amidotransferase subunit C (99 aa).

It belongs to the GatC family. As to quaternary structure, heterotrimer of A, B and C subunits.

It catalyses the reaction L-glutamyl-tRNA(Gln) + L-glutamine + ATP + H2O = L-glutaminyl-tRNA(Gln) + L-glutamate + ADP + phosphate + H(+). It carries out the reaction L-aspartyl-tRNA(Asn) + L-glutamine + ATP + H2O = L-asparaginyl-tRNA(Asn) + L-glutamate + ADP + phosphate + 2 H(+). Functionally, allows the formation of correctly charged Asn-tRNA(Asn) or Gln-tRNA(Gln) through the transamidation of misacylated Asp-tRNA(Asn) or Glu-tRNA(Gln) in organisms which lack either or both of asparaginyl-tRNA or glutaminyl-tRNA synthetases. The reaction takes place in the presence of glutamine and ATP through an activated phospho-Asp-tRNA(Asn) or phospho-Glu-tRNA(Gln). In Orientia tsutsugamushi (strain Ikeda) (Rickettsia tsutsugamushi), this protein is Aspartyl/glutamyl-tRNA(Asn/Gln) amidotransferase subunit C.